Reading from the N-terminus, the 291-residue chain is m-AAA protease-interacting protein 1, mitochondrial (291 aa).

A mitochondrion-targeting transit peptide spans 1-96; the sequence is MALAARLLPQ…SFPACPQRSY (96 aa).

As to quaternary structure, interacts with AFG3L2. Interacts with SPG7. Interacts with SMDT1/EMRE (via the N-terminal transit peptide); interaction is direct and takes place before maturation of SMDT1/EMRE.

It is found in the mitochondrion matrix. Its function is as follows. Promotes sorting of SMDT1/EMRE in mitochondria by ensuring its maturation. Interacts with the transit peptide region of SMDT1/EMRE precursor protein in the mitochondrial matrix, leading to protect it against protein degradation by YME1L1, thereby ensuring SMDT1/EMRE maturation by the mitochondrial processing peptidase (PMPCA and PMPCB). The sequence is that of m-AAA protease-interacting protein 1, mitochondrial from Homo sapiens (Human).